A 34-amino-acid polypeptide reads, in one-letter code: Cycloamanide B proprotein (34 aa).

Residues 1–10 constitute a propeptide that is removed on maturation; the sequence is MSDINAARLP. The segment at residues 11–17 is a cross-link (cyclopeptide (Ser-Pro)); it reads SFFFPIP. Positions 18 to 34 are excised as a propeptide; that stretch reads CISDDIEMVLTRGESLC.

This sequence belongs to the MSDIN fungal toxin family. In terms of processing, processed by the macrocyclase-peptidase enzyme POPB to yield a cyclic decapeptide. POPB first removes 10 residues from the N-terminus. Conformational trapping of the remaining peptide forces the enzyme to release this intermediate rather than proceed to macrocyclization. The enzyme rebinds the remaining peptide in a different conformation and catalyzes macrocyclization of the N-terminal 7 residues.

Cyclic heptapeptide that belongs to the MSDIN-like toxin family responsible for a large number of food poisoning cases and deaths. Cycloaminide B is non-toxic to mammals but shows immunosuppressive activity, probably through the inhibition of the action of interleukin-1 and interleukin-2. The sequence is that of Cycloamanide B proprotein from Amanita phalloides (Death cap).